Reading from the N-terminus, the 113-residue chain is Large ribosomal subunit protein bL17 (113 aa).

This sequence belongs to the bacterial ribosomal protein bL17 family. As to quaternary structure, part of the 50S ribosomal subunit. Contacts protein L32.

This Clostridium botulinum (strain Loch Maree / Type A3) protein is Large ribosomal subunit protein bL17.